Reading from the N-terminus, the 159-residue chain is Putative 4-hydroxy-4-methyl-2-oxoglutarate aldolase (159 aa).

Residues 75–78 (GDQL) and Arg97 each bind substrate. Position 98 (Asp98) interacts with a divalent metal cation.

The protein belongs to the class II aldolase/RraA-like family. Homotrimer. A divalent metal cation is required as a cofactor.

The enzyme catalyses 4-hydroxy-4-methyl-2-oxoglutarate = 2 pyruvate. It catalyses the reaction oxaloacetate + H(+) = pyruvate + CO2. Catalyzes the aldol cleavage of 4-hydroxy-4-methyl-2-oxoglutarate (HMG) into 2 molecules of pyruvate. Also contains a secondary oxaloacetate (OAA) decarboxylase activity due to the common pyruvate enolate transition state formed following C-C bond cleavage in the retro-aldol and decarboxylation reactions. The sequence is that of Putative 4-hydroxy-4-methyl-2-oxoglutarate aldolase from Laribacter hongkongensis (strain HLHK9).